Reading from the N-terminus, the 236-residue chain is Probable glutathione S-transferase BZ2 (236 aa).

A GST N-terminal domain is found at methionine 1–glycine 80. Residues serine 9, lysine 37, isoleucine 51, and glutamate 64–serine 65 contribute to the glutathione site. Residues aspartate 92–phenylalanine 221 form the GST C-terminal domain.

It belongs to the GST superfamily. HSP26 family.

The catalysed reaction is RX + glutathione = an S-substituted glutathione + a halide anion + H(+). It functions in the pathway pigment biosynthesis; anthocyanin biosynthesis. This is Probable glutathione S-transferase BZ2 (BZ2) from Zea mays (Maize).